A 354-amino-acid chain; its full sequence is uncharacterized protein (354 aa).

Positions 1–21 are cleaved as a signal peptide; sequence MRYLLIVITFFMGFSSLPAWA.

To E.coli YbgO.

Its function is as follows. May be involved in a fimbrial system chaperoned by YqiH and exported by YqiG. This is an uncharacterized protein from Escherichia coli (strain K12).